Consider the following 647-residue polypeptide: XK-related protein 4 (647 aa).

A compositionally biased stretch (basic and acidic residues) spans 1-15 (MAAKSDGRLKMKKSS). The tract at residues 1–44 (MAAKSDGRLKMKKSSDVAFTPLQNSDNSGSVQGLAPGLPSGSGA) is disordered. Polar residues predominate over residues 21-31 (PLQNSDNSGSV). 2 helical membrane passes run 112-132 (WILA…WLAV) and 142-162 (WFGL…VFSF). At Ser-197 the chain carries Phosphoserine. Residues 197-238 (SAAGEGEVRPSTPQRQASNASKSNIAATNSGSNSNGATRTSG) form a disordered region. Over residues 207–236 (STPQRQASNASKSNIAATNSGSNSNGATRT) the composition is skewed to polar residues. Transmembrane regions (helical) follow at residues 245–265 (CSFC…GQIW), 303–323 (HLLA…CIIV), 328–348 (LQAL…WALA), 362–382 (KPIS…TIAA), 393–415 (VFQL…WIVH), 425–445 (WEEI…WFNV), 454–474 (LFIY…LWYL), and 484–504 (FAIP…VFML).

Belongs to the XK family. Homodimer; homodimerization takes place upon caspase cleavage. Interacts with the processed C-terminus of XRCC4 (protein XRCC4, C-terminus); interaction promotes the phospholipid scramblase activity. Undergoes proteolytic processing by caspase-3 (CASP3), caspase-6 (CASP6) and caspase-7 (CASP7) to generate the XK-related protein 4, processed form, leading to its activation. In terms of tissue distribution, highly expressed in expressed in the brain; weakly expressed in the spleen, thymus, uterus, blood vessels and fetus.

The protein localises to the cell membrane. It catalyses the reaction a 1,2-diacyl-sn-glycero-3-phospho-L-serine(in) = a 1,2-diacyl-sn-glycero-3-phospho-L-serine(out). Its activity is regulated as follows. Phospholipid scramblase activity is activated upon caspase cleavage to generate the XK-related protein 4, processed form. Does not act prior the onset of apoptosis. Homodimerizes upon caspase cleavage. Phospholipid scramblase activity is activated following interaction with the processed C-terminus of XRCC4 (protein XRCC4, C-terminus). Its function is as follows. Phospholipid scramblase that promotes phosphatidylserine exposure on apoptotic cell surface. Phosphatidylserine is a specific marker only present at the surface of apoptotic cells and acts as a specific signal for engulfment. This Mus musculus (Mouse) protein is XK-related protein 4.